A 187-amino-acid polypeptide reads, in one-letter code: Elongation factor P (187 aa).

Belongs to the elongation factor P family.

Its subcellular location is the cytoplasm. Its pathway is protein biosynthesis; polypeptide chain elongation. Involved in peptide bond synthesis. Stimulates efficient translation and peptide-bond synthesis on native or reconstituted 70S ribosomes in vitro. Probably functions indirectly by altering the affinity of the ribosome for aminoacyl-tRNA, thus increasing their reactivity as acceptors for peptidyl transferase. The chain is Elongation factor P from Mycobacterium ulcerans (strain Agy99).